Reading from the N-terminus, the 80-residue chain is Metallothionein-like protein type 2, MT2-4/MT2-25 (80 aa).

The protein belongs to the metallothionein superfamily. Type 15 family.

Metallothioneins have a high content of cysteine residues that bind various heavy metals. The sequence is that of Metallothionein-like protein type 2, MT2-4/MT2-25 from Brassica juncea (Indian mustard).